The primary structure comprises 759 residues: ARF GTPase-activating protein GIT2 (759 aa).

The Arf-GAP domain occupies 1-124; that stretch reads MSKRLRSSEV…AFVHRLPCRD (124 aa). A C4-type zinc finger spans residues 11–34; sequence CADCSGPDPSWASVNRGTFLCDEC. ANK repeat units follow at residues 132-161, 166-195, and 199-228; these read DLSK…QANF, KGNT…DPGT, and SGKT…ELTD. A disordered region spans residues 379 to 422; sequence QHSVESQDNDQPDYDSVASDEDTDLETTASKTNRQKSLDSDLSD. The span at 385–403 shows a compositional bias: acidic residues; sequence QDNDQPDYDSVASDEDTDL. Ser394 and Ser397 each carry phosphoserine. Thr401 bears the Phosphothreonine mark. A phosphoserine mark is found at Ser415, Ser418, and Ser421. A coiled-coil region spans residues 437–478; it reads LVASEAKIQQLMKVNNNLSDELRIMQKKLQTLQSENSNLRKQ. The span at 480–499 shows a compositional bias: polar residues; sequence TTNVYQVQTGSEYTDTSNHS. Disordered stretches follow at residues 480 to 538 and 554 to 643; these read TTNV…EESR and VTSS…TEDV. A Phosphotyrosine modification is found at Tyr484. The segment covering 555 to 569 has biased composition (low complexity); the sequence is TSSSSLPSFPSTLSW. Residues Ser559, Ser562, and Ser570 each carry the phosphoserine modification. Over residues 570-583 the composition is skewed to basic and acidic residues; it reads SRDESARRASRLEK. A compositionally biased stretch (polar residues) spans 584-597; sequence QNSTPESDYDNTPN. Thr587 carries the phosphothreonine modification. Ser614 bears the Phosphoserine mark.

In terms of assembly, may form heterooligomers with GIT1. Directly interacts with protein Piccolo/PCLO. Interacts with PPFIA1 and PPFIA2. Interacts with ARHGEF7. Identified in a complex with ARHGEF6 and BIN2. Interacts with PAK3. Interacts with PXN/paxillin. Interacts with TGFB1I1. Forms a complex with EFNB1 and GRB4/NCK2.

GTPase-activating protein for ADP ribosylation factor family members, including ARF1. The sequence is that of ARF GTPase-activating protein GIT2 (GIT2) from Homo sapiens (Human).